Consider the following 160-residue polypeptide: 2-C-methyl-D-erythritol 2,4-cyclodiphosphate synthase (160 aa).

The a divalent metal cation site is built by Asp11 and His13. 4-CDP-2-C-methyl-D-erythritol 2-phosphate is bound by residues Asp11–His13 and His37–Ser38. His45 is a binding site for a divalent metal cation. 4-CDP-2-C-methyl-D-erythritol 2-phosphate contacts are provided by residues Asp59–Gly61, Phe64–Asp68, Ala103–Ala109, Thr135–Glu138, Phe142, and Arg145.

This sequence belongs to the IspF family. Homotrimer. The cofactor is a divalent metal cation.

It carries out the reaction 4-CDP-2-C-methyl-D-erythritol 2-phosphate = 2-C-methyl-D-erythritol 2,4-cyclic diphosphate + CMP. The protein operates within isoprenoid biosynthesis; isopentenyl diphosphate biosynthesis via DXP pathway; isopentenyl diphosphate from 1-deoxy-D-xylulose 5-phosphate: step 4/6. In terms of biological role, involved in the biosynthesis of isopentenyl diphosphate (IPP) and dimethylallyl diphosphate (DMAPP), two major building blocks of isoprenoid compounds. Catalyzes the conversion of 4-diphosphocytidyl-2-C-methyl-D-erythritol 2-phosphate (CDP-ME2P) to 2-C-methyl-D-erythritol 2,4-cyclodiphosphate (ME-CPP) with a corresponding release of cytidine 5-monophosphate (CMP). This chain is 2-C-methyl-D-erythritol 2,4-cyclodiphosphate synthase, found in Thiobacillus denitrificans (strain ATCC 25259 / T1).